A 116-amino-acid chain; its full sequence is Large ribosomal subunit protein bL17 (116 aa).

This sequence belongs to the bacterial ribosomal protein bL17 family. As to quaternary structure, part of the 50S ribosomal subunit. Contacts protein L32.

This Helicobacter hepaticus (strain ATCC 51449 / 3B1) protein is Large ribosomal subunit protein bL17.